We begin with the raw amino-acid sequence, 363 residues long: MPASKKISDRNHLGQVFDKLLNQIGESEEFELPEWLNKGKPTPYIFIRRNIYLTKKVKRRVEDDGIFCSCSSSSPGSSSTVCGSNCHCGMLFSSCSSSCKCGSECNNKPFQQRHVKKMKLIQTEKCGSGIVAEEEIEAGEFIIEYVGEVIDDKTCEERLWKMKHRGETNFYLCEITRDMVIDATHKGNKSRYINHSCNPNTQMQKWIIDGETRIGIFATRGIKKGEHLTYDYQFVQFGADQDCHCGAVGCRRKLGVKPSKPKIASDEAFNLVAHELAQTLPKVHQNGLVNRHIDAGKSWNNLSQRDTCSRNCIGVVIRLSRPTSDRCFGLVRHFDEYSRKHSVMFEDGVTEFVDMSREDWEIV.

The 52-residue stretch at 63–114 folds into the AWS domain; the sequence is DDGIFCSCSSSSPGSSSTVCGSNCHCGMLFSSCSSSCKCGSECNNKPFQQRH. Positions 116–233 constitute an SET domain; that stretch reads KKMKLIQTEK…KGEHLTYDYQ (118 aa). The Post-SET domain maps to 239–255; that stretch reads ADQDCHCGAVGCRRKLG.

The protein belongs to the class V-like SAM-binding methyltransferase superfamily. Histone-lysine methyltransferase family. SET2 subfamily.

It is found in the nucleus. The protein localises to the chromosome. It localises to the centromere. The catalysed reaction is L-lysyl-[histone] + S-adenosyl-L-methionine = N(6)-methyl-L-lysyl-[histone] + S-adenosyl-L-homocysteine + H(+). Its function is as follows. Histone methyltransferase. The protein is Histone-lysine N-methyltransferase ASHH3 (ASHH3) of Arabidopsis thaliana (Mouse-ear cress).